Consider the following 141-residue polypeptide: Large ribosomal subunit protein uL16 (141 aa).

Belongs to the universal ribosomal protein uL16 family. In terms of assembly, part of the 50S ribosomal subunit.

Its function is as follows. Binds 23S rRNA and is also seen to make contacts with the A and possibly P site tRNAs. The sequence is that of Large ribosomal subunit protein uL16 from Kosmotoga olearia (strain ATCC BAA-1733 / DSM 21960 / TBF 19.5.1).